The sequence spans 480 residues: MDINVLTIDATRIAIQERQATATAIAESFYKKIEAEDGEINAYLTLSRDRALAQAAKIDAIADRGDDLPRLAGLPVAIKDVISTKGVRTTAGSKILEEFIAPYDATVVQKLEAAGAVILGKTNCDEFAMGSSNENSAYGPVRNPRDKSRVPGGSSGGSAAVVAAGTAVTSLGSDTGGSIRQPASFCGVVGLMPTYGRVSRYGLIAFASSLDHIGPFAKDVKDAAIMLEVIAGRDPMDATSAEVAVPKYSDEIGKPVRGMKIGVAKEYFGEGLDPEVKASVEASIQNLAKAGAEIIEVSLPHTKYAIPTYYLVATAEASSNLARFDGVRYSHRSKEAKTLSEMYRKSRDEGFGAEVKRRIILGTYALSAGYYDAYYLKAQKVRTLLAQDFDEAFAKVDAIVTPTTPTPAFKLGEKADDPLAMYLADIFTVTADLVGIPGISVPCGSSKDGLPIGLQVFAKHFQEATMIRVAHAVEHALAAV.

Residues Lys79 and Ser154 each act as charge relay system in the active site. The tract at residues 133-156 is disordered; sequence NENSAYGPVRNPRDKSRVPGGSSG. The active-site Acyl-ester intermediate is the Ser178.

Belongs to the amidase family. GatA subfamily. Heterotrimer of A, B and C subunits.

The catalysed reaction is L-glutamyl-tRNA(Gln) + L-glutamine + ATP + H2O = L-glutaminyl-tRNA(Gln) + L-glutamate + ADP + phosphate + H(+). Allows the formation of correctly charged Gln-tRNA(Gln) through the transamidation of misacylated Glu-tRNA(Gln) in organisms which lack glutaminyl-tRNA synthetase. The reaction takes place in the presence of glutamine and ATP through an activated gamma-phospho-Glu-tRNA(Gln). This is Glutamyl-tRNA(Gln) amidotransferase subunit A from Koribacter versatilis (strain Ellin345).